We begin with the raw amino-acid sequence, 218 residues long: dTTP/UTP pyrophosphatase (218 aa).

The segment covering 1 to 10 (MTASPSSAEG) has biased composition (polar residues). The disordered stretch occupies residues 1–20 (MTASPSSAEGSSGLPDRPKL). Aspartate 87 (proton acceptor) is an active-site residue.

It belongs to the Maf family. YhdE subfamily. Requires a divalent metal cation as cofactor.

The protein resides in the cytoplasm. It carries out the reaction dTTP + H2O = dTMP + diphosphate + H(+). The catalysed reaction is UTP + H2O = UMP + diphosphate + H(+). In terms of biological role, nucleoside triphosphate pyrophosphatase that hydrolyzes dTTP and UTP. May have a dual role in cell division arrest and in preventing the incorporation of modified nucleotides into cellular nucleic acids. The chain is dTTP/UTP pyrophosphatase from Gluconobacter oxydans (strain 621H) (Gluconobacter suboxydans).